The following is a 762-amino-acid chain: Hyperosmolality-gated Ca2+ permeable channel 2.2 (762 aa).

Helical transmembrane passes span 3–23 (VSAL…LVSL), 90–110 (MVIC…AFVL), 144–164 (LWVH…LLYF), 354–374 (IATL…VTFV), 402–422 (VITG…VPPL), 445–465 (KILY…GSVI), 500–520 (GWAG…NLIA), 557–577 (VIAP…YLIY), 594–614 (QYWP…QVIA), and 615–635 (LGFF…PLIL).

It belongs to the CSC1 (TC 1.A.17) family.

It localises to the membrane. In terms of biological role, acts as an osmosensitive calcium-permeable cation channel. The chain is Hyperosmolality-gated Ca2+ permeable channel 2.2 from Arabidopsis thaliana (Mouse-ear cress).